Reading from the N-terminus, the 245-residue chain is Farnesol dehydrogenase (245 aa).

Residues 11 to 40 (VTGASSGIGAAITTDLAKAGMVVVGLARRV) and Asp-64 contribute to the NAD(+) site. Ser-145 lines the substrate pocket. Residue Tyr-160 is the Proton acceptor of the active site. Residue Lys-164 coordinates NAD(+).

Belongs to the short-chain dehydrogenases/reductases (SDR) family. In terms of assembly, homodimer. As to expression, highly expressed level in the midgut and brain in adult females, and at lower level in the abdominal and thoracic ganglia. High levels are detected in corpora allata (CA), Malpighian tubules and fat body.

It catalyses the reaction (2E,6E)-farnesol + NADP(+) = (2E,6E)-farnesal + NADPH + H(+). Mediates oxidation of farnesol into farnesal, a precursor of juvenile hormone in the corpora allata (CA), the glands that synthesize juvenile hormone. Able to oxidize C(10) to C(15) isoprenoid and aliphatic alcohols. The chain is Farnesol dehydrogenase from Aedes aegypti (Yellowfever mosquito).